Consider the following 115-residue polypeptide: uncharacterized protein (115 aa).

A signal peptide spans 1 to 29 (MKKAMAILAVLAAAAVICGLLFFHNDVTD).

This is an uncharacterized protein from Bacillus subtilis (strain 168).